Consider the following 153-residue polypeptide: Insulin-like growth factor 1.S (153 aa).

4 cysteine pairs are disulfide-bonded: C29/C38, C54/C96, C66/C109, and C100/C109. The segment at G49–T77 is b. A c region spans residues G78–R89. Residues G90 to A110 form an a region. The interval P111–A118 is d. The propeptide at R119–M153 is e peptide. The interval R119–M153 is disordered. The segment covering R125–P138 has biased composition (basic and acidic residues). Residues K139 to M153 show a composition bias toward polar residues.

This sequence belongs to the insulin family. Expressed in adult liver, lung, heart, kidney and peritoneal fat.

Its subcellular location is the secreted. In terms of biological role, the insulin-like growth factors, isolated from plasma, are structurally and functionally related to insulin but have a much higher growth-promoting activity. Promotes head development by inhibiting Wnt signaling during embryogenesis. Acts as a ligand for IGF1R. Binds to the alpha subunit of IGF1R, leading to the activation of the intrinsic tyrosine kinase activity which autophosphorylates tyrosine residues in the beta subunit thus initiatiating a cascade of down-stream signaling events leading to activation of the PI3K-AKT/PKB and the Ras-MAPK pathways. Binds to integrins. Its binding to integrins and subsequent ternary complex formation with integrins and IGFR1 are essential for IGF1 signaling. The polypeptide is Insulin-like growth factor 1.S (Xenopus laevis (African clawed frog)).